The sequence spans 240 residues: Large ribosomal subunit protein uL2 (240 aa).

Positions 1–11 (MGKRLISQNRG) are enriched in polar residues. 2 disordered regions span residues 1–28 (MGKR…KGAV) and 206–240 (GGGR…TGRK). 2 stretches are compositionally biased toward basic residues: residues 13–28 (GTPK…KGAV) and 224–240 (SPGR…TGRK).

Belongs to the universal ribosomal protein uL2 family. Part of the 50S ribosomal subunit. Forms a bridge to the 30S subunit in the 70S ribosome.

One of the primary rRNA binding proteins. Required for association of the 30S and 50S subunits to form the 70S ribosome, for tRNA binding and peptide bond formation. It has been suggested to have peptidyltransferase activity; this is somewhat controversial. Makes several contacts with the 16S rRNA in the 70S ribosome. In Methanococcus maripaludis (strain C7 / ATCC BAA-1331), this protein is Large ribosomal subunit protein uL2.